Reading from the N-terminus, the 473-residue chain is Protein AUXIN RESPONSE 4 (473 aa).

The span at 1–10 shows a compositional bias: acidic residues; that stretch reads MAIITEEEED. Positions 1–38 are disordered; it reads MAIITEEEEDPKTLNPPKNKPKDSDFTKSESTMKNPKP. Polar residues predominate over residues 29–38; sequence SESTMKNPKP. The helical transmembrane segment at 44–64 threads the bilayer; that stretch reads FPFWFYFTVVVSLATIIFISL. In terms of domain architecture, AB hydrolase-1 spans 119–283; the sequence is TVVIVHGLGL…DSSISPALPL (165 aa).

Most abundant in root tissue, lesser amounts in rosette leaves, stems and flowers and very little in mature siliques.

The protein localises to the endoplasmic reticulum membrane. In terms of biological role, required for the auxin influx facilitator AUX1 polar trafficking and its asymmetric localization within the plasma membrane. Not involved in the PIN proteins localization. This chain is Protein AUXIN RESPONSE 4 (AXR4), found in Arabidopsis thaliana (Mouse-ear cress).